The chain runs to 501 residues: Lysine--tRNA ligase (501 aa).

Residues Glu-412 and Glu-419 each contribute to the Mg(2+) site.

This sequence belongs to the class-II aminoacyl-tRNA synthetase family. As to quaternary structure, homodimer. The cofactor is Mg(2+).

It is found in the cytoplasm. It catalyses the reaction tRNA(Lys) + L-lysine + ATP = L-lysyl-tRNA(Lys) + AMP + diphosphate. This is Lysine--tRNA ligase from Chlorobium luteolum (strain DSM 273 / BCRC 81028 / 2530) (Pelodictyon luteolum).